A 97-amino-acid chain; its full sequence is Apolipoprotein C-II (97 aa).

The N-terminal stretch at 1 to 22 is a signal peptide; the sequence is MGSRFFLALFLVILMLGNEVQG. The tract at residues 63–71 is lipid binding; it reads SMDEKLRDM. The lipoprotein lipase cofactor stretch occupies residues 75–97; sequence SSAAMSTYAGIFTDQLLTLLRGE.

This sequence belongs to the apolipoprotein C2 family. In terms of tissue distribution, adult and fetal liver, intestine and peritoneal macrophages.

It is found in the secreted. Functionally, component of chylomicrons, very low-density lipoproteins (VLDL), low-density lipoproteins (LDL), and high-density lipoproteins (HDL) in plasma. Plays an important role in lipoprotein metabolism as an activator of lipoprotein lipase. The protein is Apolipoprotein C-II (Apoc2) of Mus musculus (Mouse).